A 219-amino-acid chain; its full sequence is Small ribosomal subunit protein uS3c (219 aa).

One can recognise a KH type-2 domain in the interval 47-118; the sequence is IRNHVRNSSN…KLRMTLVEVL (72 aa).

This sequence belongs to the universal ribosomal protein uS3 family. As to quaternary structure, part of the 30S ribosomal subunit.

It is found in the plastid. It localises to the chloroplast. In Chara vulgaris (Common stonewort), this protein is Small ribosomal subunit protein uS3c (rps3).